Reading from the N-terminus, the 805-residue chain is Leucine--tRNA ligase (805 aa).

Positions P40–H51 match the 'HIGH' region motif. Positions K576–S580 match the 'KMSKS' region motif. K579 serves as a coordination point for ATP.

Belongs to the class-I aminoacyl-tRNA synthetase family.

It is found in the cytoplasm. The catalysed reaction is tRNA(Leu) + L-leucine + ATP = L-leucyl-tRNA(Leu) + AMP + diphosphate. In Chlorobium limicola (strain DSM 245 / NBRC 103803 / 6330), this protein is Leucine--tRNA ligase.